The chain runs to 80 residues: MTDLIHDATLDATGLNCPEPVMMLHKHVRELAAGGVLKVIATDPSTRRDIPKFCVFLGHELLGQQEEAGTYLYWIRKKAD.

Cys17 (cysteine persulfide intermediate) is an active-site residue.

The protein belongs to the sulfur carrier protein TusA family.

The protein localises to the cytoplasm. Its function is as follows. Sulfur carrier protein which probably makes part of a sulfur-relay system. The protein is Sulfur carrier protein TusA of Pseudomonas entomophila (strain L48).